The chain runs to 500 residues: Probable cytosol aminopeptidase (500 aa).

The Mn(2+) site is built by Lys-267 and Asp-272. Residue Lys-279 is part of the active site. Mn(2+)-binding residues include Asp-290, Asp-349, and Glu-351. Arg-353 is a catalytic residue.

The protein belongs to the peptidase M17 family. It depends on Mn(2+) as a cofactor.

It localises to the cytoplasm. The catalysed reaction is Release of an N-terminal amino acid, Xaa-|-Yaa-, in which Xaa is preferably Leu, but may be other amino acids including Pro although not Arg or Lys, and Yaa may be Pro. Amino acid amides and methyl esters are also readily hydrolyzed, but rates on arylamides are exceedingly low.. The enzyme catalyses Release of an N-terminal amino acid, preferentially leucine, but not glutamic or aspartic acids.. Functionally, presumably involved in the processing and regular turnover of intracellular proteins. Catalyzes the removal of unsubstituted N-terminal amino acids from various peptides. The chain is Probable cytosol aminopeptidase from Tolumonas auensis (strain DSM 9187 / NBRC 110442 / TA 4).